Here is a 272-residue protein sequence, read N- to C-terminus: Diaminopimelate epimerase (272 aa).

The substrate site is built by Asn-11 and Asn-60. Cys-69 acts as the Proton donor in catalysis. Residues 70 to 71 (GN), Asn-181, and 199 to 200 (ER) contribute to the substrate site. Cys-209 serves as the catalytic Proton acceptor. 210–211 (GT) contacts substrate.

This sequence belongs to the diaminopimelate epimerase family. As to quaternary structure, homodimer.

The protein localises to the cytoplasm. The catalysed reaction is (2S,6S)-2,6-diaminopimelate = meso-2,6-diaminopimelate. Its pathway is amino-acid biosynthesis; L-lysine biosynthesis via DAP pathway; DL-2,6-diaminopimelate from LL-2,6-diaminopimelate: step 1/1. Catalyzes the stereoinversion of LL-2,6-diaminopimelate (L,L-DAP) to meso-diaminopimelate (meso-DAP), a precursor of L-lysine and an essential component of the bacterial peptidoglycan. In Helicobacter pylori (strain P12), this protein is Diaminopimelate epimerase.